Consider the following 331-residue polypeptide: Glucokinase (331 aa).

16–21 (GDIGGT) serves as a coordination point for ATP.

Belongs to the bacterial glucokinase family.

It is found in the cytoplasm. The catalysed reaction is D-glucose + ATP = D-glucose 6-phosphate + ADP + H(+). The polypeptide is Glucokinase (Pseudomonas aeruginosa (strain UCBPP-PA14)).